The following is a 419-amino-acid chain: Epothilone C/D epoxidase (419 aa).

Positions 180 and 304 each coordinate substrate. Residue Cys-365 participates in heme binding.

It belongs to the cytochrome P450 family. It depends on heme as a cofactor.

It catalyses the reaction epothilone C + 2 reduced [2Fe-2S]-[ferredoxin] + O2 + 2 H(+) = epothilone A + 2 oxidized [2Fe-2S]-[ferredoxin] + H2O. The enzyme catalyses epothilone D + 2 reduced [2Fe-2S]-[ferredoxin] + O2 + 2 H(+) = epothilone B + 2 oxidized [2Fe-2S]-[ferredoxin] + H2O. Its pathway is secondary metabolite biosynthesis; epothilone biosynthesis. In terms of biological role, involved in the biosynthesis of epothilones, macrolactones which have a narrow anti-fungal spectrum and microtubule-stabilizing activity. Catalyzes the epoxidation of epothilones C and D to epothilones A and B, respectively. This is Epothilone C/D epoxidase (cyp167A1) from Sorangium cellulosum (Polyangium cellulosum).